The sequence spans 275 residues: MPSNICKFFLTWWLIQQVTGLTGPLMLDTAPNAFDDQYEGCVNKMEEKAPLLLQEDFNMNAKLKVAWEEAKKRWNNIKPSRSYPKGFNDFHGTALVAYTGSIAVDFNRAVREFKENPGQFHYKAFHYYLTRALQLLSNGDCHSVYRGTKTRFHYTGAGSVRFGQFTSSSLSKKVAQSQEFFSDHGTLFIIKTCLGVYIKEFSFRPDQEEVLIPGYEVYQKVRTQGYNEIFLDSPKRKKSNYNCLYSSAGARESCVSLFLVVLPSLLVQLLCLAEP.

The N-terminal stretch at 1–20 (MPSNICKFFLTWWLIQQVTG) is a signal peptide. Cystine bridges form between Cys41–Cys243 and Cys141–Cys193. Residues 61-238 (AKLKVAWEEA…IFLDSPKRKK (178 aa)) form the TR mART core domain. Tyr98, Arg146, and Gln164 together coordinate NAD(+). Arg146 is a catalytic residue. The active site involves Ser167. Residue Ser202 participates in NAD(+) binding. Arg204 is subject to ADP-ribosylarginine; by autocatalysis. Glu209 is a catalytic residue. The GPI-anchor amidated serine moiety is linked to residue Ser246. Positions 247–275 (SAGARESCVSLFLVVLPSLLVQLLCLAEP) are cleaved as a propeptide — removed in mature form.

The protein belongs to the Arg-specific ADP-ribosyltransferase family. Postthymic T-cells.

The protein localises to the cell membrane. It carries out the reaction L-arginyl-[protein] + NAD(+) = N(omega)-(ADP-D-ribosyl)-L-arginyl-[protein] + nicotinamide + H(+). It catalyses the reaction NAD(+) + H2O = ADP-D-ribose + nicotinamide + H(+). Its function is as follows. Has both NAD(+) glycohydrolase and ADP-ribosyltransferase activity (to a lesser extent). In Rattus norvegicus (Rat), this protein is T-cell ecto-ADP-ribosyltransferase 2 (Art2b).